The chain runs to 360 residues: MKFGPNTTQIYIPLDLQINILLRLPVKSLLRFRCVSKLWCSIITSHDFRNRHFNITSSSAPPRLLIAFQDFYGEKLLLVSSPNPNVSSSSTSSCCVPYKDLSKVEINGRKVYNAVWGLTCFESRLKVGICNPSTRELHMFPQIKFKNYPDIFPCIMYFLGYDRIEDQYKVLAIDNLPWRLEYKVVPILRASRKDKGSPNISIIVSFDVRSETYKNSNVPSKLLPMDTSDNFWTANCNCFIGDKTLINYNGKIGVVEKPQHGRFRMWVVEDAEKEEWSMNTFYLPQSASGLDFKVMNTFYTGEICLVTEKISDPFCLFYYNLKTNSMRSVTYEGLLHMATFKQALQFSVSYHYESLVSLET.

Residues 6-56 (NTTQIYIPLDLQINILLRLPVKSLLRFRCVSKLWCSIITSHDFRNRHFNIT) enclose the F-box domain.

The sequence is that of Putative F-box protein At3g47150 from Arabidopsis thaliana (Mouse-ear cress).